The chain runs to 167 residues: Lipoprotein signal peptidase (167 aa).

4 helical membrane-spanning segments follow: residues 8–28 (TFLT…VVLL), 46–66 (WGHF…FGLF), 68–88 (QYKI…ALFL), and 101–121 (IALT…LLHG). Catalysis depends on residues Asp-125 and Asp-143. The helical transmembrane segment at 139-159 (FNLADAFISIGTLLLIGHLYF) threads the bilayer.

Belongs to the peptidase A8 family.

It is found in the cell inner membrane. It catalyses the reaction Release of signal peptides from bacterial membrane prolipoproteins. Hydrolyzes -Xaa-Yaa-Zaa-|-(S,diacylglyceryl)Cys-, in which Xaa is hydrophobic (preferably Leu), and Yaa (Ala or Ser) and Zaa (Gly or Ala) have small, neutral side chains.. Its pathway is protein modification; lipoprotein biosynthesis (signal peptide cleavage). In terms of biological role, this protein specifically catalyzes the removal of signal peptides from prolipoproteins. This chain is Lipoprotein signal peptidase, found in Chlamydia trachomatis serovar L2 (strain ATCC VR-902B / DSM 19102 / 434/Bu).